Reading from the N-terminus, the 232-residue chain is Probable intron-encoded endonuclease aI3 (232 aa).

The protein belongs to the LAGLIDADG endonuclease family.

It is found in the mitochondrion. Mitochondrial DNA endonuclease involved in intron homing. In Dictyostelium discoideum (Social amoeba), this protein is Probable intron-encoded endonuclease aI3 (aI3).